We begin with the raw amino-acid sequence, 270 residues long: Putative phosphoenolpyruvate synthase regulatory protein (270 aa).

Residue 150 to 157 (GVSRCGKT) participates in ADP binding.

It belongs to the pyruvate, phosphate/water dikinase regulatory protein family. PSRP subfamily.

It carries out the reaction [pyruvate, water dikinase] + ADP = [pyruvate, water dikinase]-phosphate + AMP + H(+). It catalyses the reaction [pyruvate, water dikinase]-phosphate + phosphate + H(+) = [pyruvate, water dikinase] + diphosphate. Functionally, bifunctional serine/threonine kinase and phosphorylase involved in the regulation of the phosphoenolpyruvate synthase (PEPS) by catalyzing its phosphorylation/dephosphorylation. In Shewanella sp. (strain ANA-3), this protein is Putative phosphoenolpyruvate synthase regulatory protein.